The chain runs to 547 residues: Inositol-tetrakisphosphate 1-kinase 6 (547 aa).

Position 263 (Lys263) interacts with 1D-myo-inositol 1,3,4-trisphosphate. ATP is bound by residues Arg317 and Lys370. Residues 327 to 539 form the ATP-grasp domain; it reads LEGLSAEGRP…FWDAIKQSYE (213 aa). Positions 381 and 415 each coordinate 1D-myo-inositol 1,3,4-trisphosphate. ATP is bound by residues 404–415, Ser430, and Ser450; that span reads QEYIDHGSKIFK. 3 residues coordinate Mg(2+): Asp497, Asp511, and Asn513. 1D-myo-inositol 1,3,4-trisphosphate contacts are provided by Asn513 and Ser517.

Belongs to the ITPK1 family. As to quaternary structure, monomer. Mg(2+) serves as cofactor.

The catalysed reaction is 1D-myo-inositol 3,4,5,6-tetrakisphosphate + ATP = 1D-myo-inositol 1,3,4,5,6-pentakisphosphate + ADP + H(+). The enzyme catalyses 1D-myo-inositol 1,3,4-trisphosphate + ATP = 1D-myo-inositol 1,3,4,5-tetrakisphosphate + ADP + H(+). It catalyses the reaction 1D-myo-inositol 1,3,4-trisphosphate + ATP = 1D-myo-inositol 1,3,4,6-tetrakisphosphate + ADP + H(+). Its function is as follows. Kinase that can phosphorylate various inositol polyphosphate such as Ins(3,4,5,6)P4 or Ins(1,3,4)P3 and participates in phytic acid biosynthesis in developing seeds. Phytic acid is the primary storage form of phosphorus in cereal grains and other plant seeds. The chain is Inositol-tetrakisphosphate 1-kinase 6 from Oryza sativa subsp. indica (Rice).